The primary structure comprises 102 residues: Cytochrome c oxidase subunit 6a, mitochondrial (102 aa).

Residues 1–36 constitute a mitochondrion transit peptide; that stretch reads MATAIVRSALSRAVTRAAPKTSVAPKRNFSSSAGHD.

This sequence belongs to the cytochrome c oxidase subunit 6A (TC 3.D.4.11) family.

Its subcellular location is the mitochondrion inner membrane. This protein is one of the nuclear-coded polypeptide chains of cytochrome c oxidase, the terminal oxidase in mitochondrial electron transport. This chain is Cytochrome c oxidase subunit 6a, mitochondrial (COX6A), found in Arabidopsis thaliana (Mouse-ear cress).